A 589-amino-acid polypeptide reads, in one-letter code: Inactive poly [ADP-ribose] polymerase RCD1 (589 aa).

The WWE domain occupies 64–153 (KLSAYENRSG…ETGAKTPLAW (90 aa)). Residues 248-469 (EAAVSKWDET…LIAKRDNSGV (222 aa)) enclose the PARP catalytic domain. Disordered stretches follow at residues 464–504 (RDNS…TRPK) and 569–589 (QPKSKEIPGSIRDHEEGAGGL). The segment covering 481–503 (LESNQGARGSGSANSVGSSTTRP) has biased composition (polar residues). The 72-residue stretch at 501 to 572 (TRPKSPWMPF…ITTLQNQPKS (72 aa)) folds into the RST domain. Over residues 571–589 (KSKEIPGSIRDHEEGAGGL) the composition is skewed to basic and acidic residues.

Interacts with the transcription factors NAC013/NTL1 and NAC046. Interacts with dehydration-responsive DREB2 proteins and a number of transcription factors belonging to several protein families. Interacts with turnip crinkle virus (TCV) movement protein P8. As to expression, expressed in young developing tissues, such as young leaves and flowers and root tips. In mature plants, expressed in vasculature of leaves and roots, and guard cells.

Its subcellular location is the nucleus matrix. Inactive ADP-ribosyltransferase that functions with SRO1 to regulate oxidative stress, hormonal and developmental responses. Required for embryogenesis, vegetative and reproductive development, and abiotic stress responses. May regulate several stress-responsive genes. Seems to play a larger developmental role than SRO1. Does not bind NAD in vitro. The chain is Inactive poly [ADP-ribose] polymerase RCD1 (RCD1) from Arabidopsis thaliana (Mouse-ear cress).